We begin with the raw amino-acid sequence, 199 residues long: Chaperone protein TorD (199 aa).

It belongs to the TorD/DmsD family. TorD subfamily.

The protein resides in the cytoplasm. Functionally, involved in the biogenesis of TorA. Acts on TorA before the insertion of the molybdenum cofactor and, as a result, probably favors a conformation of the apoenzyme that is competent for acquiring the cofactor. The chain is Chaperone protein TorD from Escherichia coli (strain ATCC 8739 / DSM 1576 / NBRC 3972 / NCIMB 8545 / WDCM 00012 / Crooks).